The sequence spans 2135 residues: MSHCLRASPFLSPPPPLLHPSRRRRHRQGGCIHTSPGTRPLVARARFDPPPLLRLKVSDSSDCPAPHHPHSQHQPLLPTRRQQQQPPPPYQALVASLAPLWREGLFLVRCSVFAAALSVAAALSWYAQLRARSFVESRLLPAACAALGEFLQREVHLGRVRSVSPLGITLHTCSIGPHAEEFSCAEVPVMKIRVRPFASLRRGRVVVDAVLSEPSALVAQRKDFSWLGLPAPSEGSPKRHSGEEGIDYRTKTRRLAREKAAEQWNEERDKAAREAAEMGYIVPSAQSISPSIDEMMEDDGPVDTGKSSPHLCPDEMHRKDHHIDAGIDSSSKHADLEKSFGVKARIPGISFWSRMIPNPSRRRYRRKAHSKLISDTDNSSQQRILRRSAYAAVAYFQNECSGNPDDSLPGPGESSSDGGHTNGGGEEGSPNDGPTEYSETTSMDYGELPPEKSNFASTMLIGNTDVLNGSSHNQQPSQISSHSWENNEQVSEAPVLKKRKNISEDDYRQEFDFGAFGSCTYAHNWLSFWPFQLKGFPVGFNAPSASLNVQIQKLRSLFAIGPGDNSAELSQGVGQIHPGAVQQTLPITLDSVYFNGGNLMLLGYGDQEPREMKHANGHIKFKNSYNRVHVHVTGNCMEWRQDRTSQGGGYLSTDVFVDIAEQTWHANLNVVNAFAPLFERILEIPVVWNKGRATGEVHLCMSKGDSFPSIHGQLDVKGLAFQILDAPSSFSDIVATLSFRGQRVFLHNASGWFGDAPVEASGDFGLNPEDGEFHLMCQVPSVEVNALMKTMKMRPLMFPLAGAVTAVFNCQGPLDAPVFVGSGIVSRKSLSVSGMLPSAASEAVMQNKESGAVAAFDHIPFTHVSANFTFNLDNCVADLYGIRACLLDGGEIRGAGNVWICPEGEGDDSAMDINLSGSILLDKVLHRYIPGGIQLIPLKIGELNGETRLSGSLIRPKFDIKWAAPNAEDSFSDARGNIVIAHDYIMVNSSSVSFDLNTHIQTSYIDDYLLHKEMYQRKKIMPLIVEGVDLDLRMRGFEFAHIASSIPFDSPRPLHLKASGRFKFQGKVVKYSQLVDEKNHGAIQGTIDQSKLENDVSRLVGEISLSGIKLNQLMLAPQSTGFLSISPDSIMLNATGRPDENFSIEVNVPLFFGTHEAIQDGRLLSIFLQKGQLRSNICYHPENLTSLEVRNLPLDELEFASLRGFVQKAELQLNFQKRRGHGLLSVIRPKFSGMLGESLDIAARWSGDVITMEKSVLEQANSKYELQGEYVFPGTRDRFPMESQSNGFIEKAMGGHLGSMMSSMGRWRMRLEVPGAEVAEMLPLARLLSRSTDPAIRSRSKELFMQTLHSVGFNAESLRDQLKALEMYPDWLDDDTIEDITLPGLAELRGYWRGSLDASGGGNGDTMADFDFNGEDWEWGTYKTQRVLASGSFSNNDGLRLDKLFIQKDNATLHADGSILGPLTNLHFAVLNFPVGLIPALVQAIESSTTDSIHFLRQWLTPIKGILHMEGDLRGTLAKPECDVQIRLLDGTIGGIDLGRAEVLASVTPTSRFVFDANFEPTIQSGHVNIQGSVPVTYVDSNSIEEDLEGGDGKQGIIRIPVWAKDRGLTNDISETRIMRDKPDEGWEFQLAESLKGLSWNMLEPGEVRINADIKDGGMTLITALSPYSNWLQGYAEVLLQVKGTVDHPVVDGSASFHRATVASPFLRTPLTNFAGNVHVISNRLCISSMESRVGRKGRLSMKGTLPLHNIEPSANDKIELKCEVLDIRAKNILSGQVDSQLQVTGSILRPDVSGMIRLSHGEAYLPHDKGNGAVATRLSSNKSISVPAGFDQRTVSRDVSHFLGSLSTSPDGQQSETERTPEHGSFKPNIDARLNDLKLTFGPELRIVYPLILNFAVSGDLELNGMVHPKYIRPKGVLTFENGEVNLVATQVRLKNDHLNVAKFEPDLGLDPILDLVLVGSEWQFKIQSRASMWQDNLVVTSTRSVDQDVLSPSEAAKVFESQLAESLLEGDGQLAFKKLATATLETLMPRIEGKGEFGQARWRLVYAPQIPSLLSVDPTVDPLKSLANNISFATEVEVQLGKRLQASVVRQMKDSEMAMQWSLIYQLTSRLRVLFQSTPSNRLLFEYSATSQG.

Composition is skewed to low complexity over residues 1 to 10 (MSHCLRASPF) and 72 to 84 (QHQP…RQQQ). The transit peptide at 1–42 (MSHCLRASPFLSPPPPLLHPSRRRRHRQGGCIHTSPGTRPLV) directs the protein to the chloroplast. 2 disordered regions span residues 1–44 (MSHC…LVAR) and 58–89 (SDSS…PPPP). At 43–104 (ARARFDPPPL…ASLAPLWREG (62 aa)) the chain is on the stromal side. Residues 105–125 (LFLVRCSVFAAALSVAAALSW) traverse the membrane as a helical segment. Over 126–2135 (YAQLRARSFV…LFEYSATSQG (2010 aa)) the chain is Chloroplast intermembrane. Residues 361-370 (RRRYRRKAHS) are compositionally biased toward basic residues. 3 disordered regions span residues 361 to 382 (RRRY…SSQQ), 401 to 492 (SGNP…QVSE), and 1843 to 1869 (FLGS…SFKP). Composition is skewed to polar residues over residues 373–382 (ISDTDNSSQQ), 454–490 (NFAS…NEQV), and 1846–1856 (SLSTSPDGQQS). A compositionally biased stretch (basic and acidic residues) spans 1857 to 1866 (ETERTPEHGS).

This sequence belongs to the TamB family. Part of the TIC complex, which can interact with components of the TOC complex to form a larger import complex. In terms of tissue distribution, highly expressed in third leaf and developing seeds. Expressed in anthers, pistils, flag leaves and young panicles.

It is found in the plastid. The protein localises to the chloroplast inner membrane. The protein resides in the chloroplast intermembrane space. It localises to the chloroplast. Its subcellular location is the amyloplast. Part of the inner chloroplast membrane translocon complex (TIC) which associates with the outer chloroplast membrane translocon complex (TOC) and forms a supercomplex involved in protein precursor import into the chloroplast stroma. Required for the regulation of starch granule size in amyloplasts. This Oryza sativa subsp. japonica (Rice) protein is Protein SUBSTANDARD STARCH GRAIN 4, chloroplastic.